A 525-amino-acid chain; its full sequence is Light-independent protochlorophyllide reductase subunit B (525 aa).

[4Fe-4S] cluster is bound at residue D36. The active-site Proton donor is D274. Position 409–410 (409–410 (GL)) interacts with substrate. The segment at 433–464 (HGGKAVAREESPVAPADLAPAATSDTPAAPSP) is disordered. The segment covering 444-464 (PVAPADLAPAATSDTPAAPSP) has biased composition (low complexity).

The protein belongs to the ChlB/BchB/BchZ family. In terms of assembly, protochlorophyllide reductase is composed of three subunits; BchL, BchN and BchB. Forms a heterotetramer of two BchB and two BchN subunits. The cofactor is [4Fe-4S] cluster.

The enzyme catalyses chlorophyllide a + oxidized 2[4Fe-4S]-[ferredoxin] + 2 ADP + 2 phosphate = protochlorophyllide a + reduced 2[4Fe-4S]-[ferredoxin] + 2 ATP + 2 H2O. The protein operates within porphyrin-containing compound metabolism; bacteriochlorophyll biosynthesis (light-independent). Component of the dark-operative protochlorophyllide reductase (DPOR) that uses Mg-ATP and reduced ferredoxin to reduce ring D of protochlorophyllide (Pchlide) to form chlorophyllide a (Chlide). This reaction is light-independent. The NB-protein (BchN-BchB) is the catalytic component of the complex. The polypeptide is Light-independent protochlorophyllide reductase subunit B (Rhodobacter capsulatus (strain ATCC BAA-309 / NBRC 16581 / SB1003)).